We begin with the raw amino-acid sequence, 266 residues long: Signal peptidase I (266 aa).

The Cytoplasmic segment spans residues 1–20 (MQTDNTKSNTNKTAKQEWGS). Residues 21 to 41 (FAFVICIALLIRILIMEPFTV) form a helical membrane-spanning segment. Topologically, residues 42 to 266 (PTGSMKATIL…IFRNLYNTDA (225 aa)) are periplasmic. Residues S45 and K108 contribute to the active site.

The protein belongs to the peptidase S26 family.

It localises to the cell inner membrane. The catalysed reaction is Cleavage of hydrophobic, N-terminal signal or leader sequences from secreted and periplasmic proteins.. Its function is as follows. Complements E.coli mutants temperature-sensitive for LepB function. The chain is Signal peptidase I (lepB) from Rickettsia rickettsii (strain Sheila Smith).